The primary structure comprises 293 residues: Elongation factor Ts (293 aa).

Positions 80 to 83 (TDFV) are involved in Mg(2+) ion dislocation from EF-Tu.

Belongs to the EF-Ts family.

It is found in the cytoplasm. Associates with the EF-Tu.GDP complex and induces the exchange of GDP to GTP. It remains bound to the aminoacyl-tRNA.EF-Tu.GTP complex up to the GTP hydrolysis stage on the ribosome. This chain is Elongation factor Ts, found in Burkholderia thailandensis (strain ATCC 700388 / DSM 13276 / CCUG 48851 / CIP 106301 / E264).